The chain runs to 388 residues: Putative membrane protein MJ1562 (388 aa).

6 helical membrane-spanning segments follow: residues 22 to 42, 219 to 239, 246 to 266, 273 to 293, 320 to 340, and 351 to 371; these read FLMLLIILIITVFAGISATNV, SQSFTTTVGLIGILIILIIYF, IMPLLPVLIAVIWTGGAMGLL, ATAGIGSLILGLGIDYGIHLM, AVMATTATTVVGFLALVLAPL, and ALGISFCMVVVLTLLPALIVI.

This sequence belongs to the resistance-nodulation-cell division (RND) (TC 2.A.6) family. MmpL subfamily.

The protein localises to the cell membrane. In Methanocaldococcus jannaschii (strain ATCC 43067 / DSM 2661 / JAL-1 / JCM 10045 / NBRC 100440) (Methanococcus jannaschii), this protein is Putative membrane protein MJ1562.